The following is a 384-amino-acid chain: tRNA-dihydrouridine(20) synthase [NAD(P)+] (384 aa).

FMN-binding positions include 12-14 (PMV) and glutamine 88. Cysteine 117 functions as the Proton donor in the catalytic mechanism. Residues lysine 160, histidine 188, 222 to 224 (NGA), and 249 to 250 (AE) contribute to the FMN site. The disordered stretch occupies residues 359–384 (KQKRKQTDHIGSDTKKQKVVPLPTDI). Residues 363 to 374 (KQTDHIGSDTKK) show a composition bias toward basic and acidic residues.

The protein belongs to the Dus family. Dus2 subfamily. Monomer. FMN serves as cofactor. N-glycosylated.

Its subcellular location is the cytoplasm. It localises to the nucleus. The enzyme catalyses 5,6-dihydrouridine(20) in tRNA + NADP(+) = uridine(20) in tRNA + NADPH + H(+). The catalysed reaction is 5,6-dihydrouridine(20) in tRNA + NAD(+) = uridine(20) in tRNA + NADH + H(+). It carries out the reaction a 5,6-dihydrouridine in mRNA + NAD(+) = a uridine in mRNA + NADH + H(+). It catalyses the reaction a 5,6-dihydrouridine in mRNA + NADP(+) = a uridine in mRNA + NADPH + H(+). Functionally, catalyzes the NADPH-dependent synthesis of dihydrouridine, a modified base found in the D-loop of most tRNAs. Specifically modifies U20 in cytoplasmic tRNAs. Also able to mediate dihydrouridylation of some mRNAs, thereby affecting their translation. The chain is tRNA-dihydrouridine(20) synthase [NAD(P)+] (SMM1) from Saccharomyces cerevisiae (strain ATCC 204508 / S288c) (Baker's yeast).